A 186-amino-acid polypeptide reads, in one-letter code: Ribosome-recycling factor (186 aa).

It belongs to the RRF family.

Its subcellular location is the cytoplasm. Its function is as follows. Responsible for the release of ribosomes from messenger RNA at the termination of protein biosynthesis. May increase the efficiency of translation by recycling ribosomes from one round of translation to another. The chain is Ribosome-recycling factor from Burkholderia thailandensis (strain ATCC 700388 / DSM 13276 / CCUG 48851 / CIP 106301 / E264).